Reading from the N-terminus, the 181-residue chain is Oligoribonuclease (181 aa).

The Exonuclease domain occupies 8-171 (LIWVDLEMTG…DDIRESIAEL (164 aa)). The active site involves Tyr129.

This sequence belongs to the oligoribonuclease family.

It is found in the cytoplasm. 3'-to-5' exoribonuclease specific for small oligoribonucleotides. This is Oligoribonuclease from Aliivibrio fischeri (strain ATCC 700601 / ES114) (Vibrio fischeri).